Consider the following 142-residue polypeptide: Large ribosomal subunit protein bL17 (142 aa).

The protein belongs to the bacterial ribosomal protein bL17 family. In terms of assembly, part of the 50S ribosomal subunit. Contacts protein L32.

The protein is Large ribosomal subunit protein bL17 of Protochlamydia amoebophila (strain UWE25).